A 134-amino-acid chain; its full sequence is Methylglyoxal synthase (134 aa).

One can recognise an MGS-like domain in the interval 1-134 (MHIALIAHDE…DWRDLRRNDE (134 aa)). Residues H8, K12, 34–37 (TGTT), and 54–55 (SG) each bind substrate. D60 (proton donor/acceptor) is an active-site residue. H87 contacts substrate.

This sequence belongs to the methylglyoxal synthase family.

It catalyses the reaction dihydroxyacetone phosphate = methylglyoxal + phosphate. Functionally, catalyzes the formation of methylglyoxal from dihydroxyacetone phosphate. The polypeptide is Methylglyoxal synthase (Listeria innocua serovar 6a (strain ATCC BAA-680 / CLIP 11262)).